A 259-amino-acid polypeptide reads, in one-letter code: Global transcriptional regulator CodY (259 aa).

The GAF domain stretch occupies residues 1–155; sequence MNLLEKTRKI…GATVVGMEIL (155 aa). Residues 203–222 constitute a DNA-binding region (H-T-H motif); the sequence is ASKIADRVGITRSVIVNALR. A Phosphoserine modification is found at Ser215.

The protein belongs to the CodY family.

The protein resides in the cytoplasm. DNA-binding global transcriptional regulator which is involved in the adaptive response to starvation and acts by directly or indirectly controlling the expression of numerous genes in response to nutrient availability. During rapid exponential growth, CodY is highly active and represses genes whose products allow adaptation to nutrient depletion. The polypeptide is Global transcriptional regulator CodY (Anoxybacillus flavithermus (strain DSM 21510 / WK1)).